Here is a 446-residue protein sequence, read N- to C-terminus: 4-aminobutyrate aminotransferase (446 aa).

Lys-291 carries the post-translational modification N6-(pyridoxal phosphate)lysine.

This sequence belongs to the class-III pyridoxal-phosphate-dependent aminotransferase family. Requires pyridoxal 5'-phosphate as cofactor.

The catalysed reaction is 4-aminobutanoate + 2-oxoglutarate = succinate semialdehyde + L-glutamate. The enzyme catalyses (S)-3-amino-2-methylpropanoate + 2-oxoglutarate = 2-methyl-3-oxopropanoate + L-glutamate. It functions in the pathway amino-acid degradation; 4-aminobutanoate degradation. The chain is 4-aminobutyrate aminotransferase (gabT) from Mycobacterium leprae (strain TN).